The primary structure comprises 410 residues: MGSLGTMLRYPDDIYPLLKMKRAIEKAEKQIPPEPHWGFCYSMLHKVSRSFSLVIQQLNTELRNAVCVFYLVLRALDTVEDDTSIPTDEKVPILIAFHRHIYDTDWHYSCGTKEYKILMDQFHHVSAAFLELEKGYQEAIEEITRRMGAGMAKFICQEVETVDDYDEYCHYVAGLVGLGLSKLFLAAGSEVLTPDWEAISNSMGLFLQKTNIIRDYLEDINEIPKSRMFWPREIWGKYADKLEDLKYEENTNKSVQCLNEMVTNALMHIEDCLKYMVSLRDPSIFRFCAIPQIMAIGTLALCYNNEQVFRGVVKLRRGLTAKVIDRTKTMADVYGAFYDFSCMLKTKVDKNDPNASKTLNRLEAVQKLCRDAGVLQNRKSYVNDKGQPNSVFIIMVVILLAIVFAYLRAN.

G2 carries the post-translational modification N-acetylglycine. 2 helical membrane passes run 283–303 and 387–407; these read SIFRFCAIPQIMAIGTLALCY and QPNSVFIIMVVILLAIVFAYL.

It belongs to the phytoene/squalene synthase family. Requires Mg(2+) as cofactor. Mn(2+) serves as cofactor. In terms of tissue distribution, expressed in all tissues analyzed (seedlings, cotyledons, inflorescences, siliques, leaves, stems and roots). Highly expressed in roots and pollen.

The protein localises to the endoplasmic reticulum membrane. It carries out the reaction 2 (2E,6E)-farnesyl diphosphate + NADPH + H(+) = squalene + 2 diphosphate + NADP(+). The enzyme catalyses 2 (2E,6E)-farnesyl diphosphate + NADH + H(+) = squalene + 2 diphosphate + NAD(+). Its pathway is terpene metabolism; lanosterol biosynthesis; lanosterol from farnesyl diphosphate: step 1/3. The polypeptide is Squalene synthase 1 (Arabidopsis thaliana (Mouse-ear cress)).